The primary structure comprises 569 residues: Phosphoglucomutase 2 (569 aa).

The segment at 1–23 (MSFQIETVPTKPYEDQKPGTSGL) is disordered. Serine 2 is subject to N-acetylserine. Arginine 24 is a binding site for alpha-D-glucose 1,6-bisphosphate. A phosphothreonine mark is found at threonine 111 and threonine 117. Serine 119 lines the alpha-D-glucose 1,6-bisphosphate pocket. Residue serine 119 is the Phosphoserine intermediate of the active site. Residues serine 119, aspartate 290, aspartate 292, and aspartate 294 each contribute to the Mg(2+) site. Serine 119 bears the Phosphoserine mark. The alpha-D-glucose 1,6-bisphosphate site is built by aspartate 294, arginine 295, threonine 359, glutamate 378, serine 380, and lysine 391.

Belongs to the phosphohexose mutase family. Monomer. Mg(2+) serves as cofactor. It depends on Zn(2+) as a cofactor. O-glycosylated with mannose residues. Substrate of UDP-glucose--glycoprotein glucose phosphotransferase, linking glucose in a phosphodiester linkage to O-linked mannose.

Its subcellular location is the cytoplasm. It carries out the reaction alpha-D-glucose 1-phosphate = alpha-D-glucose 6-phosphate. It catalyses the reaction O-phospho-L-seryl-[protein] + alpha-D-glucose 1-phosphate = alpha-D-glucose 1,6-bisphosphate + L-seryl-[protein]. The catalysed reaction is alpha-D-glucose 1,6-bisphosphate + L-seryl-[protein] = O-phospho-L-seryl-[protein] + alpha-D-glucose 6-phosphate. Its function is as follows. Major phosphoglucomutase isozyme that catalyzes the reversible isomerization of alpha-D-glucose 1-phosphate to alpha-D-glucose 6-phosphate. The mechanism proceeds via the intermediate compound alpha-D-glucose 1,6-bisphosphate. Constitutes about 80-90% of the phosphoglucomutase activity in the cell. Key enzyme in hexose metabolism. The forward reaction is an essential step in the energy metabolism of galactose since the product of the galactose pathway enzymes in yeast is glucose 1-phosphate. The reverse reaction is an essential step for biosynthesis when carbon sources other than galactose are the energy source because glucose 1-phosphate is the starting point for the synthesis of UDP-glucose, which acts as a precursor for the synthesis of oligosaccharides and trehalose. This chain is Phosphoglucomutase 2, found in Saccharomyces cerevisiae (strain ATCC 204508 / S288c) (Baker's yeast).